We begin with the raw amino-acid sequence, 269 residues long: Tryptophan synthase alpha chain (269 aa).

Residues Glu49 and Asp60 each act as proton acceptor in the active site.

The protein belongs to the TrpA family. In terms of assembly, tetramer of two alpha and two beta chains.

It catalyses the reaction (1S,2R)-1-C-(indol-3-yl)glycerol 3-phosphate + L-serine = D-glyceraldehyde 3-phosphate + L-tryptophan + H2O. It functions in the pathway amino-acid biosynthesis; L-tryptophan biosynthesis; L-tryptophan from chorismate: step 5/5. In terms of biological role, the alpha subunit is responsible for the aldol cleavage of indoleglycerol phosphate to indole and glyceraldehyde 3-phosphate. This Pseudomonas putida (strain W619) protein is Tryptophan synthase alpha chain.